The sequence spans 266 residues: MKEIKVIIAGPRGRMGHEAVLLMERTEHFNLVAAVDYKHGGEKISDLPGMPALHAPIYADLHTCLDEVEADVLLDLTTPEVGKQHVTLAVERGLRSVIGTTGFTEEELTRLTENAKEKAVGTIIAPNFAIGAVLMMKFSQMAAKYFQDVEVIELHHDQKLDAPSGTAVKTVELIRQNRESKQQGHPNEVEQLAGARGANVDGIHIHSVRLPGLIAHQEVMFGGDGQMLTVRHDSFNRASFMSGVKLSIETVMNLDHLVYGLENIID.

10–15 contacts NAD(+); that stretch reads GPRGRM. Lysine 38 provides a ligand contact to NADP(+). NAD(+)-binding positions include 99–101 and 125–128; these read GTT and APNF. Histidine 155 functions as the Proton donor/acceptor in the catalytic mechanism. Histidine 156 contributes to the (S)-2,3,4,5-tetrahydrodipicolinate binding site. The Proton donor role is filled by lysine 159. Residue 165–166 participates in (S)-2,3,4,5-tetrahydrodipicolinate binding; it reads GT.

This sequence belongs to the DapB family.

It is found in the cytoplasm. It carries out the reaction (S)-2,3,4,5-tetrahydrodipicolinate + NAD(+) + H2O = (2S,4S)-4-hydroxy-2,3,4,5-tetrahydrodipicolinate + NADH + H(+). The catalysed reaction is (S)-2,3,4,5-tetrahydrodipicolinate + NADP(+) + H2O = (2S,4S)-4-hydroxy-2,3,4,5-tetrahydrodipicolinate + NADPH + H(+). It participates in amino-acid biosynthesis; L-lysine biosynthesis via DAP pathway; (S)-tetrahydrodipicolinate from L-aspartate: step 4/4. In terms of biological role, catalyzes the conversion of 4-hydroxy-tetrahydrodipicolinate (HTPA) to tetrahydrodipicolinate. In Bacillus cereus (strain ATCC 14579 / DSM 31 / CCUG 7414 / JCM 2152 / NBRC 15305 / NCIMB 9373 / NCTC 2599 / NRRL B-3711), this protein is 4-hydroxy-tetrahydrodipicolinate reductase.